The chain runs to 156 residues: Small ribosomal subunit protein uS7 (156 aa).

The protein belongs to the universal ribosomal protein uS7 family. As to quaternary structure, part of the 30S ribosomal subunit. Contacts proteins S9 and S11.

Its function is as follows. One of the primary rRNA binding proteins, it binds directly to 16S rRNA where it nucleates assembly of the head domain of the 30S subunit. Is located at the subunit interface close to the decoding center, probably blocks exit of the E-site tRNA. This Sphingopyxis alaskensis (strain DSM 13593 / LMG 18877 / RB2256) (Sphingomonas alaskensis) protein is Small ribosomal subunit protein uS7.